The sequence spans 504 residues: MTQTNGFDALHAHAQRLRGAAIPALLAAEPERPTQYAWQVGPLYFNFARQKYDRAALDALFAIARERDLAGAFQRLFRGEQVNVTEQRAALHTALRGDLTDAPVASEAYATAAEVRQRMGALIQQLEATDVTDIVSVGIGGSDLGPRLVADALRPVSGARLRVHFVSNVDGAAMQRTLATLDPARTAGILISKTFGTQETLLNGSILHAWLGGSERLYAVSANPERAAKAFDIAPGRVLPMWDWVGGRYSLWSAVGFPIALAIGFERFEQLLEGAAQFDAHALNTPLEENVAVLHGLTAVWNRNLLGSATHAVMTYDQRLALLPAYLQQLVMESLGKRVKLDGSAVDSDTVSVWWGGAGTDVQHSFFQALHQGTSVVPADFIGTVHNDDPYAENHVALMANVLAQTEALANGQDSSDPHRSYPGGRPSTVILLDALTPQALGALISMYEHSVYVQSVMWGINAFDQFGVELGKQLASQLLPALKGESADVADPVTRELLSKLRG.

Residue E333 is the Proton donor of the active site. Residues H364 and K473 contribute to the active site.

This sequence belongs to the GPI family.

The protein resides in the cytoplasm. The catalysed reaction is alpha-D-glucose 6-phosphate = beta-D-fructose 6-phosphate. It participates in carbohydrate biosynthesis; gluconeogenesis. Its pathway is carbohydrate degradation; glycolysis; D-glyceraldehyde 3-phosphate and glycerone phosphate from D-glucose: step 2/4. Its function is as follows. Catalyzes the reversible isomerization of glucose-6-phosphate to fructose-6-phosphate. This chain is Glucose-6-phosphate isomerase, found in Xanthomonas oryzae pv. oryzae (strain KACC10331 / KXO85).